A 457-amino-acid polypeptide reads, in one-letter code: Cyclic dof factor 2 (457 aa).

The interval 1–130 is disordered; it reads MADPAIKLFG…GGTACSQEGK (130 aa). Residues 22-35 are compositionally biased toward polar residues; sequence DSSSSYTGFLTETQ. Acidic residues-rich tracts occupy residues 45–54 and 62–73; these read TGDDDDEEMG and EGDDVGDGGGES. 2 stretches are compositionally biased toward basic and acidic residues: residues 74 to 94 and 106 to 118; these read ETDK…RNES and EKTE…KTNE. Residues 138–192 form a Dof-type zinc finger; that stretch reads LPCPRCNSMETKFCYYNNYNVNQPRHFCKKCQRYWTAGGTMRNVPVGAGRRKNKS. Zn(2+)-binding residues include Cys-140, Cys-143, Cys-165, and Cys-168. Disordered regions lie at residues 334–377 and 417–457; these read QPNS…KSKP and AFRS…HESS. Low complexity predominate over residues 337–346; sequence SPSGSNPNSP.

As to quaternary structure, interacts with ADO2 (via kelch repeats) and ADO3 (via kelch repeats). In terms of tissue distribution, expressed in the vasculature of cotyledons and hypocotyls, leaves and roots.

It is found in the nucleus. In terms of biological role, transcription factor that binds specifically to a 5'-AA[AG]G-3' consensus core sequence. Regulates a photoperiodic flowering response. Transcriptional repressor of 'CONSTANS' expression. The stability of CDF2 is controlled by 'GIGANTEA' and redundantly by ADO3, ADO2 and/or ADO1. The protein is Cyclic dof factor 2 (CDF2) of Arabidopsis thaliana (Mouse-ear cress).